Here is a 597-residue protein sequence, read N- to C-terminus: CTP synthase (597 aa).

The tract at residues 1 to 272 is amidoligase domain; sequence MARPKNVKYV…DMRVLKKLGL (272 aa). Ser-18 lines the CTP pocket. A UTP-binding site is contributed by Ser-18. ATP is bound at residue 19 to 24; sequence SLGKGI. Tyr-59 provides a ligand contact to L-glutamine. Asp-76 provides a ligand contact to ATP. Residues Asp-76 and Glu-146 each coordinate Mg(2+). Residues 153-155, 193-198, and Lys-229 each bind CTP; these read DIE and KTKPTQ. UTP is bound by residues 193-198 and Lys-229; that span reads KTKPTQ. Residues 299–543 form the Glutamine amidotransferase type-1 domain; the sequence is NVAICGKYTE…VGAAKAYADG (245 aa). Gly-363 contacts L-glutamine. Cys-390 (nucleophile; for glutamine hydrolysis) is an active-site residue. L-glutamine contacts are provided by residues 391–394, Glu-414, and Arg-471; that span reads LGMQ. Residues His-516 and Glu-518 contribute to the active site.

It belongs to the CTP synthase family. Homotetramer.

The catalysed reaction is UTP + L-glutamine + ATP + H2O = CTP + L-glutamate + ADP + phosphate + 2 H(+). It carries out the reaction L-glutamine + H2O = L-glutamate + NH4(+). It catalyses the reaction UTP + NH4(+) + ATP = CTP + ADP + phosphate + 2 H(+). It functions in the pathway pyrimidine metabolism; CTP biosynthesis via de novo pathway; CTP from UDP: step 2/2. Its activity is regulated as follows. Allosterically activated by GTP, when glutamine is the substrate; GTP has no effect on the reaction when ammonia is the substrate. The allosteric effector GTP functions by stabilizing the protein conformation that binds the tetrahedral intermediate(s) formed during glutamine hydrolysis. Inhibited by the product CTP, via allosteric rather than competitive inhibition. Its function is as follows. Catalyzes the ATP-dependent amination of UTP to CTP with either L-glutamine or ammonia as the source of nitrogen. Regulates intracellular CTP levels through interactions with the four ribonucleotide triphosphates. This is CTP synthase from Chlorobium luteolum (strain DSM 273 / BCRC 81028 / 2530) (Pelodictyon luteolum).